The primary structure comprises 351 residues: Formyl peptide receptor-related sequence 1 (351 aa).

Residues 1–27 lie on the Extracellular side of the membrane; the sequence is METNYSIPLNGSDVVIYDSTISRVLWI. Asn-4 and Asn-10 each carry an N-linked (GlcNAc...) asparagine glycan. The chain crosses the membrane as a helical span at residues 28 to 50; that stretch reads LSMVVVSITFFLGVLGNGLVIWV. The Cytoplasmic segment spans residues 51-61; sequence AGFRMPHTVTT. The helical transmembrane segment at 62–83 threads the bilayer; sequence IWYLNLALADFSFTATLPFLLV. Residues 84–100 lie on the Extracellular side of the membrane; that stretch reads EMAMKEKWPFGWFLCKL. A disulfide bridge links Cys-98 with Cys-176. The chain crosses the membrane as a helical span at residues 101-121; that stretch reads VHIAVDVNLFGSVFLIAVIAL. The Cytoplasmic segment spans residues 122–140; the sequence is DRCICVLHPVWAQNHRTVS. The helical transmembrane segment at 141–162 threads the bilayer; sequence LARNVVVGSWIFALILTLPLFL. The Extracellular portion of the chain corresponds to 163–205; the sequence is FLTTVRDARGDVHCRLSFVSWGNSVEERLNTAITFVTTRGIIR. The helical transmembrane segment at 206–226 threads the bilayer; the sequence is FIVSFSLPMSFVAICYGLITT. At 227–242 the chain is on the cytoplasmic side; it reads KIHKKAFVNSSRPFRV. The chain crosses the membrane as a helical span at residues 243–266; that stretch reads LTGVVASFFICWFPFQLVALLGTV. Topologically, residues 267-286 are extracellular; the sequence is WLKEMQFSGSYKIIGRLVNP. Residues 287–306 form a helical membrane-spanning segment; sequence TSSLAFFNSCLNPILYVFMG. The Cytoplasmic segment spans residues 307–351; sequence QDFQERLIHSLSSRLQRALSEDSGHISDTRTNLASLPEDIEIKAI.

This sequence belongs to the G-protein coupled receptor 1 family. Expressed exclusively in vomeronasal neurons. Expressed in 0.6 % of a subset of sensory neurons located in the basal layer of the vomeronasal organ. Each neuron appears to express only one receptor gene. Expressed mostly in neutrophils, followed by spleen and lung and expressed at very low levels in heart and liver.

It is found in the cell membrane. In terms of biological role, low affinity receptor for N-formyl-methionyl peptides. Receptor for lipoxin A4. May have an olfactory function associated with the identification of pathogens or of pathogenic states. This is Formyl peptide receptor-related sequence 1 (Fpr-s1) from Mus musculus (Mouse).